Here is a 464-residue protein sequence, read N- to C-terminus: F-box/FBD/LRR-repeat protein At1g80470 (464 aa).

The F-box domain occupies 15-62 (DWISGLADDLLLQILSKVPTRESVFTSRMSKRWRNLWRHVPALDLDSS). LRR repeat units follow at residues 96–122 (EEHC…TILS), 123–150 (KVNI…TLYS), 152–178 (VFDA…KFDG), 197–222 (IITH…KLES), 223–249 (MRED…SITD), and 273–298 (DAED…TISA). One can recognise an FBD domain in the interval 359 to 413 (KEEINLSLVPHCFESSLEYVQLKVPITVSETSSKMELAIYFVRNCSVLKKLMLNE).

The polypeptide is F-box/FBD/LRR-repeat protein At1g80470 (Arabidopsis thaliana (Mouse-ear cress)).